The chain runs to 268 residues: Eukaryotic translation initiation factor 3 subunit J (268 aa).

Disordered regions lie at residues 1 to 27, 40 to 63, and 217 to 249; these read MSWD…DDEF, DAEE…KVDK, and LAKV…KKDQ. A compositionally biased stretch (basic residues) spans 47 to 58; the sequence is QKQKPKAAPKAA. A coiled-coil region spans residues 191–221; sequence IESIRQTVATLNVLIKEKERQERQARLAKVK.

This sequence belongs to the eIF-3 subunit J family. In terms of assembly, component of the eukaryotic translation initiation factor 3 (eIF-3) complex.

The protein resides in the cytoplasm. Its function is as follows. Component of the eukaryotic translation initiation factor 3 (eIF-3) complex, which is involved in protein synthesis of a specialized repertoire of mRNAs and, together with other initiation factors, stimulates binding of mRNA and methionyl-tRNAi to the 40S ribosome. The eIF-3 complex specifically targets and initiates translation of a subset of mRNAs involved in cell proliferation. The polypeptide is Eukaryotic translation initiation factor 3 subunit J (Eremothecium gossypii (strain ATCC 10895 / CBS 109.51 / FGSC 9923 / NRRL Y-1056) (Yeast)).